The primary structure comprises 541 residues: Atrial natriuretic peptide receptor 3 (541 aa).

The signal sequence occupies residues 1–26; sequence MPSLLVLTFSPCVLLGWALLAGGTGG. Residues 27 to 481 are Extracellular-facing; the sequence is GGVGGGGGGA…PCKSSGGLEE (455 aa). An N-linked (GlcNAc...) (complex) asparagine glycan is attached at asparagine 86. 3 residues coordinate chloride: serine 106, valine 135, and cysteine 136. Intrachain disulfides connect cysteine 108/cysteine 136 and cysteine 213/cysteine 261. N-linked (GlcNAc...) (high mannose) asparagine glycosylation occurs at asparagine 293. A glycan (N-linked (GlcNAc...) (complex) asparagine) is linked at asparagine 394. The chain crosses the membrane as a helical span at residues 482–504; sequence SAVTGIVVGALLGAGLLMAFYFF. Residues 505 to 541 lie on the Cytoplasmic side of the membrane; the sequence is RKKYRITIERRTQQEESNLGKHRELREDSIRSHFSVA.

Belongs to the ANF receptor family. Homodimer; disulfide-linked. Dimers can also be formed through the C-terminal cysteine of isoform 2. Interacts with OSTN.

The protein localises to the cell membrane. In terms of biological role, receptor for the natriuretic peptide hormones, binding with similar affinities atrial natriuretic peptide NPPA/ANP, brain natriuretic peptide NPPB/BNP, and C-type natriuretic peptide NPPC/CNP. May function as a clearance receptor for NPPA, NPPB and NPPC, regulating their local concentrations and effects. Acts as a regulator of osteoblast differentiation and bone growth by binding to its ligand osteocrin, thereby preventing binding between NPR3/NPR-C and natriuretic peptides, leading to increase cGMP production. The polypeptide is Atrial natriuretic peptide receptor 3 (NPR3) (Homo sapiens (Human)).